The sequence spans 367 residues: MVAVLTWALALLSAFATVQTQKGFWDYFSQSSGDKSKVARVQQQKLTWEPTSLKDSLEQDLSNMDKFLEKLGPLSGQGREPPGLPHDPEGMRQQLQEELAEVRARLEPYMAEAHQQVGWNLEGLRRQLKPYTVELMEQVARRVQELQEQLRVVGEGTKAQLLGGVDEARGLLQELQTRVVQHTGRVRELFHPYAQRLVTGIGRHVQELHRSVAPHAAASSARLSRCVQTLSRKLTLKAEALHARIQQNLDQLLEELSAFASAGAGGAEEGANSGPQMLSQEVRQRLQAFRHDTFVQIADFTRAIDQETEEVQLQLAPPPPGHSAFAPEFLQADSSEARSKLQARLEDLWEDINDSLHDRGLSHLEEP.

The signal sequence occupies residues 1–20 (MVAVLTWALALLSAFATVQT). The residue at position 56 (S56) is a Phosphoserine. The tract at residues 71–90 (LGPLSGQGREPPGLPHDPEG) is disordered.

The protein belongs to the apolipoprotein A1/A4/E family. As to quaternary structure, interacts with GPIHBP1. Interacts with SORL1; this interaction leads to APOA5 internalization and sorting either to lysosomes and degradation, or to the trans-Golgi network. In terms of processing, phosphorylated by FAM20C in the extracellular medium.

It localises to the secreted. The protein resides in the early endosome. It is found in the late endosome. Its subcellular location is the golgi apparatus. The protein localises to the trans-Golgi network. Minor apolipoprotein mainly associated with HDL and to a lesser extent with VLDL. May also be associated with chylomicrons. Important determinant of plasma triglyceride (TG) levels by both being a potent stimulator of apo-CII lipoprotein lipase (LPL) TG hydrolysis and an inhibitor of the hepatic VLDL-TG production rate (without affecting the VLDL-apoB production rate). Activates poorly lecithin:cholesterol acyltransferase (LCAT) and does not enhance efflux of cholesterol from macrophages. Binds heparin. The protein is Apolipoprotein A-V (APOA5) of Leptonychotes weddellii (Weddell seal).